The primary structure comprises 191 residues: MSIDRKKLILEAATKSFTQFGYKATTMDLVAKLANVGKGTIYTFFKNKEELFDEIFTTLLKEMKQKADEAMEPSLPFHENVHRALFAILEFRKTHQLTIKIFQENAEIGTMAVQEVIQKMERSILSYIKSKIEDGIKSGAIKPCDPELTAFVMLKLYIALIFDWEKQHPPLDKETIAGLLELYVVKGLSAN.

An HTH tetR-type domain is found at 3 to 63; the sequence is IDRKKLILEA…EIFTTLLKEM (61 aa). The segment at residues 26–45 is a DNA-binding region (H-T-H motif); that stretch reads TMDLVAKLANVGKGTIYTFF.

This is an uncharacterized protein from Bacillus subtilis (strain 168).